Reading from the N-terminus, the 579-residue chain is MISAVLNLPSTPLLPLLWFTLIIPASLTNPKFVWRFSITETWSTGNQAHSQTQGTADCSPQGCQDALLLNFHLSSVGNYDHPVICFLYDQTEYNCKNYWQETNLGCPYNYCNMHEIGLMCANGICTPNDRPFVRNRTSGGYILTIKDPWDPRWAQGVKGGLYATSWSSYPTATLQIKRVYVQQVPAPKSKQVDPPKSVQALQNLTSVVKSHEQKIQKLLSPPNSPNNEDPFSWLTLIRQGLNLTQAAGVRNLSHCFLCAALGKAPLVAVPLPTAFNITTDSTSSSQATSLPQVPLYRNPQSQTLPFCYSTPNSSWCDRTQAPSRTQTAPVGGYFWCNQTLSKTLNHASITQSLCVPVSLVPSLTLYSEGELAELASQLSSSNNIQKQAVFLPLIIGVSLASSLVASGLGTGALTHSIQSTQTLSTQVQAAIEASAESLASLQRQITSVAQVAAQNRRALDLLTAEKGGTCLFLGEECCYYVNESGLVDTNVKTLNKIKKELQQFNAPLTPGPPVWLLPVVQQMLPFLIPILILCLMLCLAPILIKFLRARVQEITRVTFNQMLLHPYTQLPTSDPNYAP.

The N-terminal stretch at M1–I22 is a signal peptide. Residues I23–Q387 are surface protein. Residues I23–M523 lie on the Extracellular side of the membrane. N135, N203, N242, and N251 each carry an N-linked (GlcNAc...) asparagine glycan. The short motif at C255 to C258 is the CXXC element. Residues N276, N312, and N337 are each glycosylated (N-linked (GlcNAc...) asparagine). The segment at A388 to L408 is fusion peptide. Positions A388 to P579 are transmembrane protein. Positions A453–T469 match the CKS-17 motif. Cysteines 470 and 477 form a disulfide. The CX6CC signature appears at C470–C478. Residue N482 is glycosylated (N-linked (GlcNAc...) asparagine). Residues L524 to I544 form a helical membrane-spanning segment. Residues K545 to P579 are Cytoplasmic-facing.

This sequence belongs to the gamma type-C retroviral envelope protein family. HERV class-I F(c)1 env subfamily. In terms of processing, specific enzymatic cleavages in vivo yield the mature SU and TM proteins. The CXXC motif is highly conserved across a broad range of retroviral envelope proteins. It is thought to participate in the formation of a labile disulfide bond possibly with the CX6CC motif present in the transmembrane domain.

Its subcellular location is the cell membrane. In terms of biological role, retroviral envelope proteins mediate receptor recognition and membrane fusion during early infection. Endogenous envelope proteins may have kept, lost or modified their original function during evolution. This chain is ERV-BabFcenv provirus ancestral Env polyprotein, found in Papio anubis (Olive baboon).